Consider the following 595-residue polypeptide: Ketol-acid reductoisomerase, chloroplastic (595 aa).

A chloroplast-targeting transit peptide spans 1–72 (MAATAATTFS…GGGSALSAQM (72 aa)). Positions 108–306 (VRGGRNLFPL…ALGSPFTFAT (199 aa)) constitute a KARI N-terminal Rossmann domain. NADP(+) is bound by residues 129-136 (GVIGWGSQ), 162-167 (RKGSNS), and 201-205 (SDSAQ). Residue H226 is part of the active site. KARI C-terminal knotted domains are found at residues 307-455 (TLEQ…RPAG) and 456-592 (DLGP…RPEL). Mg(2+) contacts are provided by D315, E319, E492, and E496. S518 is a binding site for substrate.

It belongs to the ketol-acid reductoisomerase family. In terms of assembly, homodimer. It depends on Mg(2+) as a cofactor.

Its subcellular location is the plastid. The protein localises to the chloroplast. The catalysed reaction is (2R)-2,3-dihydroxy-3-methylbutanoate + NADP(+) = (2S)-2-acetolactate + NADPH + H(+). The enzyme catalyses (2R,3R)-2,3-dihydroxy-3-methylpentanoate + NADP(+) = (S)-2-ethyl-2-hydroxy-3-oxobutanoate + NADPH + H(+). Its pathway is amino-acid biosynthesis; L-isoleucine biosynthesis; L-isoleucine from 2-oxobutanoate: step 2/4. It participates in amino-acid biosynthesis; L-valine biosynthesis; L-valine from pyruvate: step 2/4. The chain is Ketol-acid reductoisomerase, chloroplastic (AHRI) from Spinacia oleracea (Spinach).